Consider the following 162-residue polypeptide: Interleukin-15 (162 aa).

The N-terminal stretch at 1–29 (MRILKPYLRSTSIQCYLCLLLNSHFLTEA) is a signal peptide. Positions 30-48 (GIHVFILGCISAGLPKTEA) are excised as a propeptide. 2 cysteine pairs are disulfide-bonded: Cys-83–Cys-133 and Cys-90–Cys-136. N-linked (GlcNAc...) asparagine glycosylation is found at Asn-113, Asn-121, and Asn-127.

The protein belongs to the IL-15/IL-21 family.

The protein localises to the secreted. Functionally, cytokine that plays a major role in the development of inflammatory and protective immune responses to microbial invaders and parasites by modulating immune cells of both the innate and adaptive immune systems. Stimulates the proliferation of natural killer cells, T-cells and B-cells and promotes the secretion of several cytokines. In monocytes, induces the production of IL8 and monocyte chemotactic protein 1/CCL2, two chemokines that attract neutrophils and monocytes respectively to sites of infection. Unlike most cytokines, which are secreted in soluble form, IL15 is expressed in association with its high affinity IL15RA on the surface of IL15-producing cells and delivers signals to target cells that express IL2RB and IL2RG receptor subunits. Binding to its receptor triggers the phosphorylation of JAK1 and JAK3 and the recruitment and subsequent phosphorylation of signal transducer and activator of transcription-3/STAT3 and STAT5. In mast cells, induces the rapid tyrosine phosphorylation of STAT6 and thereby controls mast cell survival and release of cytokines such as IL4. This chain is Interleukin-15 (IL15), found in Ovis aries (Sheep).